A 593-amino-acid polypeptide reads, in one-letter code: MAEMGSKGVTAGKIASNVQKKLTRAQEKVLQKLGKADETKDEQFEQCVQNFNKQLTEGTRLQKDLRTYLASVKAMHEASKKLNECLQEVYEPDWPGRDEANKIAENNDLLWMDYHQKLVDQALLTMDTYLGQFPDIKSRIAKRGRKLVDYDSARHHYESLQTAKKKDEAKIAKPVSLLEKAAPQWCQGKLQAHLVAQTNLLRNQAEEELIKAQKVFEEMNVDLQEELPSLWNSRVGFYVNTFQSIAGLEENFHKEMSKLNQNLNDVLVGLEKQHGSNTFTVKAQPSDNAPAKGNKSPSPPDGSPAATPEIRVNHEPEPAGGATPGATLPKSPSQLRKGPPVPPPPKHTPSKEVKQEQILSLFEDTFVPEISVTTPSQFEAPGPFSEQASLLDLDFDPLPPVTSPVKAPTPSGQSIPWDLWEPTESPAGSLPSGEPSAAEGTFAVSWPSQTAEPGPAQPAEASEVAGGTQPAAGAQEPGETAASEAASSSLPAVVVETFPATVNGTVEGGSGAGRLDLPPGFMFKVQAQHDYTATDTDELQLKAGDVVLVIPFQNPEEQDEGWLMGVKESDWNQHKELEKCRGVFPENFTERVP.

Position 2 is an N-acetylalanine (A2). Residues 2–122 (AEMGSKGVTA…DYHQKLVDQA (121 aa)) form an interaction with BIN2 region. 2 coiled-coil regions span residues 15–42 (ASNVQKKLTRAQEKVLQKLGKADETKDE) and 193–267 (HLVA…NDVL). The BAR domain occupies 29-276 (VLQKLGKADE…LVGLEKQHGS (248 aa)). 2 disordered regions span residues 280-354 (TVKA…KEVK) and 400-488 (PVTS…AASS). 3 positions are modified to phosphoserine: S296, S298, and S303. Phosphothreonine occurs at positions 307 and 323. Residue S331 is modified to Phosphoserine. Residues 378–421 (FEAPGPFSEQASLLDLDFDPLPPVTSPVKAPTPSGQSIPWDLWE) are clathrin-binding. Residues 520–593 (GFMFKVQAQH…FPENFTERVP (74 aa)) form the SH3 domain.

Heterodimer with AMPH. Binds SH3GLB1. Interacts (via SH3 domain) with DNM1. Interacts with SYNJ1. Interacts (via SH3 domain) with DNM2. Isoform IIA interacts with CLTC. Isoform IIB does not interact with CLTC. Isoform IIC1 does not interact with CLTC. Isoform IIC2 does not interact with CLTC. Interacts with AP2A2. Interacts with AP2B1. Interacts with MYC (via N-terminal transactivation domain); the interaction requires the integrity of the conserved MYC box regions 1 and 2. Interacts with BIN2. Interacts with SNX4. Interacts (via BAR domain) with BACE1. Binds (via BAR domain) F-actin. In terms of assembly, (Microbial infection) Interacts (SH3 domain) with HCV NS5A. In terms of processing, phosphorylated by protein kinase C. In terms of tissue distribution, ubiquitous. Highest expression in the brain and muscle. Expressed in oligodendrocytes. Isoform IIA is expressed only in the brain, where it is detected in the gray matter, but not in the white matter. Isoform BIN1 is widely expressed with highest expression in skeletal muscle.

Its subcellular location is the nucleus. It localises to the cytoplasm. The protein resides in the endosome. It is found in the cell membrane. The protein localises to the sarcolemma. Its subcellular location is the T-tubule. In terms of biological role, is a key player in the control of plasma membrane curvature, membrane shaping and membrane remodeling. Required in muscle cells for the formation of T-tubules, tubular invaginations of the plasma membrane that function in depolarization-contraction coupling. Is a negative regulator of endocytosis. Is also involved in the regulation of intracellular vesicles sorting, modulation of BACE1 trafficking and the control of amyloid-beta production. In neuronal circuits, endocytosis regulation may influence the internalization of PHF-tau aggregates. May be involved in the regulation of MYC activity and the control cell proliferation. Has actin bundling activity and stabilizes actin filaments against depolymerization in vitro. The chain is Myc box-dependent-interacting protein 1 (BIN1) from Homo sapiens (Human).